We begin with the raw amino-acid sequence, 619 residues long: 1-deoxy-D-xylulose-5-phosphate synthase (619 aa).

Residues histidine 76 and 117–119 (AHS) each bind thiamine diphosphate. Aspartate 148 is a Mg(2+) binding site. Thiamine diphosphate contacts are provided by residues 149 to 150 (GA), asparagine 177, tyrosine 284, and glutamate 366. Asparagine 177 provides a ligand contact to Mg(2+).

Belongs to the transketolase family. DXPS subfamily. Homodimer. It depends on Mg(2+) as a cofactor. Thiamine diphosphate is required as a cofactor.

It catalyses the reaction D-glyceraldehyde 3-phosphate + pyruvate + H(+) = 1-deoxy-D-xylulose 5-phosphate + CO2. The protein operates within metabolic intermediate biosynthesis; 1-deoxy-D-xylulose 5-phosphate biosynthesis; 1-deoxy-D-xylulose 5-phosphate from D-glyceraldehyde 3-phosphate and pyruvate: step 1/1. In terms of biological role, catalyzes the acyloin condensation reaction between C atoms 2 and 3 of pyruvate and glyceraldehyde 3-phosphate to yield 1-deoxy-D-xylulose-5-phosphate (DXP). The chain is 1-deoxy-D-xylulose-5-phosphate synthase from Azoarcus sp. (strain BH72).